An 888-amino-acid polypeptide reads, in one-letter code: Bifunctional lysine-specific demethylase and histidyl-hydroxylase NO66 (888 aa).

3 disordered regions span residues 83-157, 187-208, and 261-446; these read AAAK…GSFS, SNNS…DSDA, and NSTS…NKLS. Residues 98 to 108 are compositionally biased toward basic and acidic residues; it reads REKNIAKKQPE. The span at 116–139 shows a compositional bias: polar residues; it reads ENVQKQLENGQENNGTLINLSNGK. Acidic residues predominate over residues 192-207; sequence FDFDSDGDSNDFDDSD. The span at 273–284 shows a compositional bias: basic and acidic residues; the sequence is VEPRKAAKRNEP. A compositionally biased stretch (low complexity) spans 392 to 403; that stretch reads KNKNNDNNNIDT. Residues 404-429 are compositionally biased toward basic and acidic residues; the sequence is NNKKDANNKKDANNNKDINNKKDANN. Low complexity predominate over residues 430 to 444; that stretch reads NKDTNNNKDNNNKNK. Residues 564 to 709 enclose the JmjC domain; sequence CSIRILNPST…NLLEVLMPSV (146 aa). Positions 610, 612, and 675 each coordinate Fe cation.

This sequence belongs to the ROX family. NO66 subfamily. It depends on Fe(2+) as a cofactor.

Its subcellular location is the nucleus. The enzyme catalyses N(6),N(6)-dimethyl-L-lysyl(36)-[histone H3] + 2 2-oxoglutarate + 2 O2 = L-lysyl(36)-[histone H3] + 2 formaldehyde + 2 succinate + 2 CO2. Its function is as follows. Oxygenase that can act as both a histone lysine demethylase and a ribosomal histidine hydroxylase. Specifically demethylates 'Lys-4' (H3K4me) and 'Lys-36' (H3K36me) of histone H3, thereby playing a central role in histone code. The chain is Bifunctional lysine-specific demethylase and histidyl-hydroxylase NO66 from Drosophila mojavensis (Fruit fly).